A 493-amino-acid chain; its full sequence is Protein nucleotidyltransferase YdiU (493 aa).

Residues Gly96, Gly98, Arg99, Lys119, Asp131, Gly132, Arg182, and Arg189 each contribute to the ATP site. Asp258 serves as the catalytic Proton acceptor. Residues Asn259 and Asp268 each contribute to the Mg(2+) site. Asp268 serves as a coordination point for ATP. Residues 471–493 (EKYTEFKNPPAPKERVSQTFCGT) are disordered.

The protein belongs to the SELO family. Mg(2+) serves as cofactor. The cofactor is Mn(2+).

The enzyme catalyses L-seryl-[protein] + ATP = 3-O-(5'-adenylyl)-L-seryl-[protein] + diphosphate. It catalyses the reaction L-threonyl-[protein] + ATP = 3-O-(5'-adenylyl)-L-threonyl-[protein] + diphosphate. It carries out the reaction L-tyrosyl-[protein] + ATP = O-(5'-adenylyl)-L-tyrosyl-[protein] + diphosphate. The catalysed reaction is L-histidyl-[protein] + UTP = N(tele)-(5'-uridylyl)-L-histidyl-[protein] + diphosphate. The enzyme catalyses L-seryl-[protein] + UTP = O-(5'-uridylyl)-L-seryl-[protein] + diphosphate. It catalyses the reaction L-tyrosyl-[protein] + UTP = O-(5'-uridylyl)-L-tyrosyl-[protein] + diphosphate. Functionally, nucleotidyltransferase involved in the post-translational modification of proteins. It can catalyze the addition of adenosine monophosphate (AMP) or uridine monophosphate (UMP) to a protein, resulting in modifications known as AMPylation and UMPylation. This Nitrosococcus oceani (strain ATCC 19707 / BCRC 17464 / JCM 30415 / NCIMB 11848 / C-107) protein is Protein nucleotidyltransferase YdiU.